A 588-amino-acid polypeptide reads, in one-letter code: Adenine deaminase (588 aa).

The protein belongs to the metallo-dependent hydrolases superfamily. Adenine deaminase family. As to quaternary structure, homodimer. Requires Mn(2+) as cofactor.

The enzyme catalyses adenine + H2O + H(+) = hypoxanthine + NH4(+). The polypeptide is Adenine deaminase (Shigella boydii serotype 4 (strain Sb227)).